The sequence spans 469 residues: 3-isopropylmalate dehydratase large subunit (469 aa).

[4Fe-4S] cluster contacts are provided by C350, C410, and C413.

The protein belongs to the aconitase/IPM isomerase family. LeuC type 1 subfamily. As to quaternary structure, heterodimer of LeuC and LeuD. [4Fe-4S] cluster serves as cofactor.

The catalysed reaction is (2R,3S)-3-isopropylmalate = (2S)-2-isopropylmalate. It participates in amino-acid biosynthesis; L-leucine biosynthesis; L-leucine from 3-methyl-2-oxobutanoate: step 2/4. In terms of biological role, catalyzes the isomerization between 2-isopropylmalate and 3-isopropylmalate, via the formation of 2-isopropylmaleate. The protein is 3-isopropylmalate dehydratase large subunit of Sinorhizobium fredii (strain NBRC 101917 / NGR234).